Here is a 341-residue protein sequence, read N- to C-terminus: Cytochrome c biogenesis protein CcsA (341 aa).

A run of 8 helical transmembrane segments spans residues 16 to 36 (LILLLTMLIYWAGAAFPGMSI), 37 to 57 (LPTLGTAGVAIANLSIATLLG), 68 to 88 (LSNLYESLFFLAWGVTAVHLI), 97 to 117 (LVGVVTTPVAMGITAFAALSL), 142 to 162 (VMMLSYATLMVGAVLAIAFLI), 249 to 269 (IIGLGFPLLTIGIIAGAVWAN), 276 to 296 (WSWDPKETWALITWLVFAAYL), and 310 to 330 (AILAASGFIVVWVCYLGVNLL).

The protein belongs to the CcmF/CycK/Ccl1/NrfE/CcsA family. In terms of assembly, may interact with ccs1.

It localises to the cellular thylakoid membrane. Functionally, required during biogenesis of c-type cytochromes (cytochrome c6 and cytochrome f) at the step of heme attachment. The chain is Cytochrome c biogenesis protein CcsA from Rippkaea orientalis (strain PCC 8801 / RF-1) (Cyanothece sp. (strain PCC 8801)).